The primary structure comprises 185 residues: ATP-dependent protease subunit HslV (185 aa).

Threonine 12 is an active-site residue. Positions 168, 171, and 174 each coordinate Na(+).

The protein belongs to the peptidase T1B family. HslV subfamily. As to quaternary structure, a double ring-shaped homohexamer of HslV is capped on each side by a ring-shaped HslU homohexamer. The assembly of the HslU/HslV complex is dependent on binding of ATP.

The protein resides in the cytoplasm. It carries out the reaction ATP-dependent cleavage of peptide bonds with broad specificity.. Its activity is regulated as follows. Allosterically activated by HslU binding. Functionally, protease subunit of a proteasome-like degradation complex believed to be a general protein degrading machinery. The chain is ATP-dependent protease subunit HslV from Roseobacter denitrificans (strain ATCC 33942 / OCh 114) (Erythrobacter sp. (strain OCh 114)).